The following is a 130-amino-acid chain: Small ribosomal subunit protein uS9 (130 aa).

Belongs to the universal ribosomal protein uS9 family.

This chain is Small ribosomal subunit protein uS9, found in Pasteurella multocida (strain Pm70).